The primary structure comprises 556 residues: U-box domain-containing protein 38 (556 aa).

Residues methionine 1 to proline 34 are disordered. The segment covering serine 13–glutamine 32 has biased composition (low complexity). The region spanning glutamine 32–serine 108 is the U-box domain. 5 ARM repeats span residues aspartate 256–leucine 295, lysine 297–leucine 336, aspartate 338–leucine 378, glutamine 380–cysteine 417, and cysteine 418–histidine 468.

As to quaternary structure, binds to SD16, SD17, SD18 and SD129.

It catalyses the reaction S-ubiquitinyl-[E2 ubiquitin-conjugating enzyme]-L-cysteine + [acceptor protein]-L-lysine = [E2 ubiquitin-conjugating enzyme]-L-cysteine + N(6)-ubiquitinyl-[acceptor protein]-L-lysine.. Its pathway is protein modification; protein ubiquitination. Functionally, functions as an E3 ubiquitin ligase. The protein is U-box domain-containing protein 38 (PUB38) of Arabidopsis thaliana (Mouse-ear cress).